Reading from the N-terminus, the 412-residue chain is ATP phosphoribosyltransferase regulatory subunit (412 aa).

The protein belongs to the class-II aminoacyl-tRNA synthetase family. HisZ subfamily. Heteromultimer composed of HisG and HisZ subunits.

It is found in the cytoplasm. The protein operates within amino-acid biosynthesis; L-histidine biosynthesis; L-histidine from 5-phospho-alpha-D-ribose 1-diphosphate: step 1/9. Required for the first step of histidine biosynthesis. May allow the feedback regulation of ATP phosphoribosyltransferase activity by histidine. In Dehalococcoides mccartyi (strain CBDB1), this protein is ATP phosphoribosyltransferase regulatory subunit.